Reading from the N-terminus, the 389-residue chain is E3 ubiquitin-protein ligase E3D (389 aa).

A2 is modified (N-acetylalanine). The short motif at 129–159 (PLPSENWGALVGEWCCHPDPFANKPLHPQEN) is the BRAT1-like motif element. C144 is a Zn(2+) binding site. The interaction with UBE2C stretch occupies residues 235 to 257 (QSSERSFPIIPRPRFVQSVIAQC). The tract at residues 353-389 (LPSATCLELLLILSKSNANLPSSLRHMNSFQVAFLKI) is HECT-like.

As to quaternary structure, interacts with UBE2C/UbcH10 (E2 ubiquitin-conjugating enzyme). In vitro, interacts with cyclin-B. Post-translationally, ubiquitinated by UBCH10 (E2 ubiquitin-conjugating enzyme).

It is found in the cytoplasm. It carries out the reaction S-ubiquitinyl-[E2 ubiquitin-conjugating enzyme]-L-cysteine + [acceptor protein]-L-lysine = [E2 ubiquitin-conjugating enzyme]-L-cysteine + N(6)-ubiquitinyl-[acceptor protein]-L-lysine.. The protein operates within protein modification; protein ubiquitination. In terms of biological role, E3 ubiquitin-protein ligase which accepts ubiquitin from specific E2 ubiquitin-conjugating enzymes, and transfers it to substrates, generally promoting their degradation by the proteasome. Independently of its E3 ubiquitin-protein ligase activity, acts as an inhibitor of CPSF3 endonuclease activity by blocking CPSF3 active site. The protein is E3 ubiquitin-protein ligase E3D (UBE3D) of Pongo abelii (Sumatran orangutan).